A 436-amino-acid polypeptide reads, in one-letter code: Serine protease inhibitor A6 (436 aa).

Residues 1 to 16 (MHLLVYLSLFFALALA) form the signal peptide. A disordered region spans residues 26 to 60 (KHRHRHEQQGHHDSAKHGHQKDKQQQEQIKNDEGK). Positions 32-60 (EQQGHHDSAKHGHQKDKQQQEQIKNDEGK) are enriched in basic and acidic residues. Residues Asn260 and Asn289 are each glycosylated (N-linked (GlcNAc...) asparagine).

It belongs to the serpin family. As to expression, liver.

The protein localises to the secreted. The protein resides in the extracellular space. Functionally, not yet known. In Xenopus laevis (African clawed frog), this protein is Serine protease inhibitor A6 (serpina6).